Consider the following 1368-residue polypeptide: DNA-directed RNA polymerase subunit beta (1368 aa).

It belongs to the RNA polymerase beta chain family. As to quaternary structure, the RNAP catalytic core consists of 2 alpha, 1 beta, 1 beta' and 1 omega subunit. When a sigma factor is associated with the core the holoenzyme is formed, which can initiate transcription.

The catalysed reaction is RNA(n) + a ribonucleoside 5'-triphosphate = RNA(n+1) + diphosphate. In terms of biological role, DNA-dependent RNA polymerase catalyzes the transcription of DNA into RNA using the four ribonucleoside triphosphates as substrates. The chain is DNA-directed RNA polymerase subunit beta from Burkholderia ambifaria (strain ATCC BAA-244 / DSM 16087 / CCUG 44356 / LMG 19182 / AMMD) (Burkholderia cepacia (strain AMMD)).